An 878-amino-acid polypeptide reads, in one-letter code: Phosphoenolpyruvate carboxylase (878 aa).

Catalysis depends on residues His138 and Lys544.

The protein belongs to the PEPCase type 1 family. Mg(2+) is required as a cofactor.

The enzyme catalyses oxaloacetate + phosphate = phosphoenolpyruvate + hydrogencarbonate. Forms oxaloacetate, a four-carbon dicarboxylic acid source for the tricarboxylic acid cycle. The sequence is that of Phosphoenolpyruvate carboxylase from Psychromonas ingrahamii (strain DSM 17664 / CCUG 51855 / 37).